We begin with the raw amino-acid sequence, 170 residues long: Calcineurin subunit B type 1 (170 aa).

Residue G2 is the site of N-myristoyl glycine attachment. 4 EF-hand domains span residues D18 to L46, Q50 to K85, D87 to N122, and Q128 to H163. The Ca(2+) site is built by D31, D33, S35, S37, E42, D63, D65, N67, E69, E74, D100, D102, D104, Y106, and E111. At Y106 the chain carries Phosphotyrosine. Residues Q131–T136 form a calcineurin A binding region. Ca(2+)-binding residues include D141, D143, D145, R147, and E152.

Belongs to the calcineurin regulatory subunit family. In terms of assembly, forms a complex composed of a calmodulin-dependent catalytic subunit (also known as calcineurin A) and a regulatory Ca(2+)-binding subunit (also known as calcineurin B). There are three catalytic subunits, each encoded by a separate gene (PPP3CA, PPP3CB, and PPP3CC) and two regulatory subunits which are also encoded by separate genes (PPP3R1 and PPP3R2). The interaction between the 2 subunits is Ca(2+)-independent. Interacts with catalytic subunit PPP3CA/calcineurin A. Interacts with catalytic subunit PPP3CB/calcineurin A. Interacts with CIB1 (via C-terminal region); the interaction increases upon cardiomyocyte hypertrophy. Interacts with RCAN1. Interacts with SPATA33 (via PQIIIT motif).

It localises to the cytoplasm. Its subcellular location is the cytosol. The protein resides in the cell membrane. It is found in the sarcolemma. Its function is as follows. Regulatory subunit of calcineurin, a calcium-dependent, calmodulin stimulated protein phosphatase. Confers calcium sensitivity. In Bos taurus (Bovine), this protein is Calcineurin subunit B type 1 (PPP3R1).